Consider the following 527-residue polypeptide: F-box-like/WD repeat-containing protein TBL1X (527 aa).

Ser-2 carries the post-translational modification N-acetylserine. The 33-residue stretch at 4 to 36 (TSDEVNFLVYRYLQESGFSHSAFTFGIESHISQ) folds into the LisH domain. The F-box-like domain occupies 41–86 (GTLVPPAALISILQKGLQYVEAEISINEDGTVFDGRPIESLSLIDA). N6-acetyllysine is present on Lys-102. The segment at 127-164 (TTPAAAAQQNPPKNGEATVNGEENGAHAINNHSKPMEI) is disordered. 8 WD repeats span residues 180–219 (GHESEVFICAWNPVSDLLASGSGDSTARIWNLNENSNGGS), 236–275 (PSNKDVTSLDWNSDGTLLATGSYDGFARIWTEDGNLASTL), 277–316 (QHKGPIFALKWNKKGNYILSAGVDKTTIIWDAHTGEAKQQ), 319–359 (FHSA…KTFQ), 360–399 (GHTNEVNAIKWDPSGMLLASCSDDMTLKIWSMKQDACVHD), 402–450 (AHSK…CIHT), 453–492 (KHQEPVYSVAFSPDGKYLASGSFDKCVHIWNTQSGSLVHS), and 494–526 (RGTGGIFEVCWNARGDKVGASASDGSVCVLDLR). Residue Lys-290 forms a Glycyl lysine isopeptide (Lys-Gly) (interchain with G-Cter in SUMO2) linkage.

The protein belongs to the WD repeat EBI family. As to quaternary structure, homotetramer; dimer of dimers. Component of the N-Cor repressor complex, at least composed of NCOR1, NCOR2, HDAC3, TBL1X, TBL1R, CORO2A and GPS2. Component of a E3 ubiquitin ligase complex containing UBE2D1, SIAH1, CACYBP/SIP, SKP1, APC and TBL1X. Interacts with GPS2 (when sumoylated); leading to protect GPS2 against degradation by the proteasome. Probably part of other corepressor complexes, that do not contain NCOR1 and NCOR2. Interacts with histones H2B, H3a and H4. Interacts with MECP2; recruits TBL1X to the heterochromatin foci. Interacts with USP44. In terms of tissue distribution, expressed in the cochlea.

The protein localises to the nucleus. Its function is as follows. F-box-like protein involved in the recruitment of the ubiquitin/19S proteasome complex to nuclear receptor-regulated transcription units. Plays an essential role in transcription activation mediated by nuclear receptors. Probably acts as integral component of corepressor complexes that mediates the recruitment of the 19S proteasome complex, leading to the subsequent proteasomal degradation of transcription repressor complexes, thereby allowing cofactor exchange. This Mus musculus (Mouse) protein is F-box-like/WD repeat-containing protein TBL1X (Tbl1x).